Consider the following 299-residue polypeptide: Ribosomal protein L11 methyltransferase (299 aa).

Residues Thr152, Gly172, Asp194, and Asn234 each contribute to the S-adenosyl-L-methionine site.

The protein belongs to the methyltransferase superfamily. PrmA family.

It localises to the cytoplasm. The catalysed reaction is L-lysyl-[protein] + 3 S-adenosyl-L-methionine = N(6),N(6),N(6)-trimethyl-L-lysyl-[protein] + 3 S-adenosyl-L-homocysteine + 3 H(+). In terms of biological role, methylates ribosomal protein L11. The protein is Ribosomal protein L11 methyltransferase of Geobacter metallireducens (strain ATCC 53774 / DSM 7210 / GS-15).